Reading from the N-terminus, the 118-residue chain is HTH-type transcriptional regulator SarT (118 aa).

Residues 55 to 78 (MRDIISYIGIDQSRIVKSVKDLSK) constitute a DNA-binding region (H-T-H motif).

Belongs to the SarA family.

Its subcellular location is the cytoplasm. Its function is as follows. Transcriptional regulator acting as an intermediary between major regulators sarA and agr and virulence genes. Represses alpha-hemolysin (hla) gene expression. Down-regulates agr RNAIII expression by repressing sarU, a positive activator of agr expression. Up-regulates sarS, which induces the expression of the cell wall-associated protein A (spa). This Staphylococcus aureus (strain NCTC 8325 / PS 47) protein is HTH-type transcriptional regulator SarT (sarT).